We begin with the raw amino-acid sequence, 840 residues long: Cullin-4 (840 aa).

The segment covering methionine 1–threonine 11 has biased composition (polar residues). The disordered stretch occupies residues methionine 1–threonine 82. Residues threonine 33–glycine 48 are compositionally biased toward basic and acidic residues. Positions phenylalanine 69–threonine 82 are enriched in polar residues. The Cullin neddylation domain occupies aspartate 772–glutamate 831. Residue lysine 786 forms a Glycyl lysine isopeptide (Lys-Gly) (interchain with G-Cter in NEDD8) linkage.

It belongs to the cullin family. In terms of assembly, part of an E3 ubiquitin-protein ligase complex including cul-4 and ddb-1. In terms of processing, neddylated. Deneddylated via its interaction with the COP9 signalosome (CSN) complex.

It functions in the pathway protein modification; protein ubiquitination. Its function is as follows. Component of cullin-based E3 ubiquitin-protein ligase complexes which mediate the ubiquitination and subsequent proteasomal degradation of target proteins. The functional specificity of the E3 ubiquitin-protein ligase complex depends on the variable substrate recognition component. In association with ddb-1 directs ubiquitination of cdt-1 during S phase and is required for restraining DNA rereplication. Probably is involved in ubiquitination of cki-1. This chain is Cullin-4 (cul-4), found in Caenorhabditis elegans.